The sequence spans 584 residues: MKSTFEAAGRVAKGMLKDPSKKYKPFKGIQLPNRQWPNKVLTKAPRWLSTDLRDGNQALPDPMNGQEKLRYFKLLCSIGFKEIEVGFPSASQTDFAFVRHLIETPGLIPDDVTISALTPSREPLILRTIEALRGAKNATVHLYNACSPLFREVVFRNSKQETLDLAIKGSKIVTAATKNALESKETNWGFEYSPETFSDTEPDFALEVCEAVKGMWKPSAAQPIIFNLPATVEMSTPNTYADLIEYFSTNISEREKVCVSLHPHNDRGTAVAAAELGQLAGGDRIEGCLFGNGERTGNVDLVTLAFNLYTQGVSPNLDFSKLDEIIRITEDCNKINVHPRHPYAGNLVFTAFSGSHQDAISKGLKAYDERKAVDPVWKVPYLPLDPHDVNSEYAAIIRVNSQSGKGGVAYLLKTNCGLDLPRALQVEFGSIVKDYSDTKGKELSIGEISDLFYTTYYLEFPGRFSVNDYTLSSNGPQSKCIKCVVDIKGEKKDTPSRVVIEGVGNGPLSALVDALRRQFNISFDIGQYSEHAIGSGNGVKAASYVEIIFNNTSFWGVGIDADVTSAGLKAVMSGVSRASRAFAK.

The Pyruvate carboxyltransferase domain occupies 45-323; the sequence is PRWLSTDLRD…SPNLDFSKLD (279 aa). Asp-54, His-262, His-264, and Asn-298 together coordinate a divalent metal cation.

It belongs to the alpha-IPM synthase/homocitrate synthase family. LeuA type 2 subfamily. In terms of assembly, homodimer. A divalent metal cation is required as a cofactor.

It carries out the reaction 3-methyl-2-oxobutanoate + acetyl-CoA + H2O = (2S)-2-isopropylmalate + CoA + H(+). Its pathway is amino-acid biosynthesis; L-leucine biosynthesis; L-leucine from 3-methyl-2-oxobutanoate: step 1/4. Functionally, catalyzes the condensation of the acetyl group of acetyl-CoA with 3-methyl-2-oxobutanoate (2-oxoisovalerate) to form 3-carboxy-3-hydroxy-4-methylpentanoate (2-isopropylmalate). The sequence is that of 2-isopropylmalate synthase (leu3) from Schizosaccharomyces pombe (strain 972 / ATCC 24843) (Fission yeast).